A 214-amino-acid polypeptide reads, in one-letter code: Cell division protein B1 (214 aa).

Its function is as follows. Part of a cell division machinery. The chain is Cell division protein B1 from Sulfolobus acidocaldarius (strain ATCC 33909 / DSM 639 / JCM 8929 / NBRC 15157 / NCIMB 11770).